The following is a 486-amino-acid chain: Glutamyl-tRNA(Gln) amidotransferase subunit A (486 aa).

Catalysis depends on charge relay system residues lysine 74 and serine 149. The Acyl-ester intermediate role is filled by serine 173.

Belongs to the amidase family. GatA subfamily. As to quaternary structure, heterotrimer of A, B and C subunits.

It catalyses the reaction L-glutamyl-tRNA(Gln) + L-glutamine + ATP + H2O = L-glutaminyl-tRNA(Gln) + L-glutamate + ADP + phosphate + H(+). In terms of biological role, allows the formation of correctly charged Gln-tRNA(Gln) through the transamidation of misacylated Glu-tRNA(Gln) in organisms which lack glutaminyl-tRNA synthetase. The reaction takes place in the presence of glutamine and ATP through an activated gamma-phospho-Glu-tRNA(Gln). The polypeptide is Glutamyl-tRNA(Gln) amidotransferase subunit A (Prochlorococcus marinus (strain SARG / CCMP1375 / SS120)).